A 237-amino-acid chain; its full sequence is Urease accessory protein UreF (237 aa).

The protein belongs to the UreF family. UreD, UreF and UreG form a complex that acts as a GTP-hydrolysis-dependent molecular chaperone, activating the urease apoprotein by helping to assemble the nickel containing metallocenter of UreC. The UreE protein probably delivers the nickel.

The protein localises to the cytoplasm. Functionally, required for maturation of urease via the functional incorporation of the urease nickel metallocenter. The sequence is that of Urease accessory protein UreF from Rhodopseudomonas palustris (strain HaA2).